Consider the following 212-residue polypeptide: uncharacterized protein (212 aa).

The next 4 helical transmembrane spans lie at 20 to 40 (FLIGFFTEYGYWAVLFVLIIC), 70 to 90 (LMLLVSMIGVLAGDSCMYWLG), 155 to 175 (FVLIDFCAAIISVPIWIYLGE), and 192 to 212 (QIVIYIFIGYLYYSFLEMEKI).

The protein belongs to the DedA family.

The protein localises to the cell membrane. This is an uncharacterized protein from Haemophilus influenzae (strain ATCC 51907 / DSM 11121 / KW20 / Rd).